Reading from the N-terminus, the 671-residue chain is Chitin biosynthesis protein CHS5 (671 aa).

The Fibronectin type-III domain maps to 78–168; that stretch reads KPESPVLKIV…EKVILRTHKM (91 aa). In terms of domain architecture, BRCT spans 166-262; sequence HKMTDMSGIT…RIVGVRGFYL (97 aa). Residues 280 to 671 form a disordered region; sequence EELSYSKENE…KKNKKKGKKK (392 aa). The residue at position 305 (T305) is a Phosphothreonine. Over residues 311–321 the composition is skewed to polar residues; it reads ASPNDNESNPS. Residues 322–332 are compositionally biased toward basic and acidic residues; sequence EAKEQGEKSGH. S338, S362, S365, S383, and S384 each carry phosphoserine. A compositionally biased stretch (polar residues) spans 349 to 365; sequence ALENETTIETVNPSVRS. Positions 409–419 are enriched in basic and acidic residues; sequence KSEDTDTHSNE. A compositionally biased stretch (polar residues) spans 434-443; it reads NNITTESAGE. Residues 461-486 show a composition bias toward acidic residues; the sequence is EIETPEVNESIEDANEPAEDSNEPVE. Over residues 487–521 the composition is skewed to basic and acidic residues; that stretch reads DSNKPVKDSNKPVEDSNKPVEDSNKPVEDSNKPVE. Acidic residues predominate over residues 522 to 538; it reads DANEPVEDTSEPVEDAG. Polar residues predominate over residues 542–551; sequence QETNEFTTDI. A phosphoserine mark is found at S573 and S579. A compositionally biased stretch (basic and acidic residues) spans 581–591; the sequence is EDVKPEEKGSE. K584 is covalently cross-linked (Glycyl lysine isopeptide (Lys-Gly) (interchain with G-Cter in ubiquitin)). Phosphoserine is present on S590. A compositionally biased stretch (polar residues) spans 606–620; the sequence is GESTTHQKTEASASL. Positions 627–638 are enriched in acidic residues; sequence EEQETTEAEVNT. Positions 657–671 are enriched in basic residues; sequence NKKKNKKNKKKGKKK.

The protein belongs to the CHS5 family. In terms of assembly, component of the CHS5/6 complex composed of the 4 CHAPS proteins BCH1, BCH2, BUD7, and CHS6 as well as at least CHS5 and GTP-bound ARF1. The complex interacts with the cargo protein CHS3.

The protein localises to the golgi apparatus. It localises to the trans-Golgi network membrane. Its function is as follows. Component of the CHS5/6 complex which mediates export of specific cargo proteins, including chitin synthase CHS3. Also involved in targeting FUS1 to sites of polarized growth. This Saccharomyces cerevisiae (strain ATCC 204508 / S288c) (Baker's yeast) protein is Chitin biosynthesis protein CHS5 (CHS5).